We begin with the raw amino-acid sequence, 346 residues long: tRNA-specific 2-thiouridylase MnmA (346 aa).

6–13 (AMSGGTDS) is an ATP binding site. The active-site Nucleophile is C90. Cysteines 90 and 187 form a disulfide. Residue G114 coordinates ATP. Residues 137-139 (KDQ) form an interaction with tRNA region. C187 serves as the catalytic Cysteine persulfide intermediate. The segment at 292-293 (RY) is interaction with tRNA.

Belongs to the MnmA/TRMU family.

It localises to the cytoplasm. It catalyses the reaction S-sulfanyl-L-cysteinyl-[protein] + uridine(34) in tRNA + AH2 + ATP = 2-thiouridine(34) in tRNA + L-cysteinyl-[protein] + A + AMP + diphosphate + H(+). Catalyzes the 2-thiolation of uridine at the wobble position (U34) of tRNA, leading to the formation of s(2)U34. The polypeptide is tRNA-specific 2-thiouridylase MnmA (Nitratidesulfovibrio vulgaris (strain DP4) (Desulfovibrio vulgaris)).